The following is a 510-amino-acid chain: Fumarate hydratase, mitochondrial (510 aa).

The transit peptide at 1-44 (MYRALRLLARSRPLVRAPAAALASAPGLGGAAVPSFWPPNAARM) directs the protein to the mitochondrion. 3 positions are modified to N6-acetyllysine; alternate: Lys61, Lys66, and Lys80. N6-succinyllysine; alternate is present on residues Lys61, Lys66, and Lys80. Phosphothreonine is present on residues Thr85 and Thr90. Lys94 carries the N6-acetyllysine modification. Lys115 and Lys122 each carry N6-acetyllysine; alternate. N6-succinyllysine; alternate is present on residues Lys115 and Lys122. Residues 145-147 (SGT), 176-179 (HPND), and 186-188 (SSN) contribute to the substrate site. Residue Lys213 is modified to N6-acetyllysine. The residue at position 223 (Lys223) is an N6-acetyllysine; alternate. Lys223 carries the post-translational modification N6-succinyllysine; alternate. Thr234 contributes to the substrate binding site. The Proton donor/acceptor role is filled by His235. The residue at position 236 (Thr236) is a Phosphothreonine; by PRKDC. At Lys256 the chain carries N6-acetyllysine. The residue at position 292 (Lys292) is an N6-acetyllysine; alternate. An N6-succinyllysine; alternate modification is found at Lys292. The active site involves Ser365. Residues Ser366 and 371–373 (KVN) contribute to the substrate site. A Phosphoserine modification is found at Ser366. N6-succinyllysine is present on residues Lys467 and Lys473. Lys502 is modified (N6-acetyllysine).

Belongs to the class-II fumarase/aspartase family. Fumarase subfamily. As to quaternary structure, homotetramer. Interacts with H2AZ1. Phosphorylation at Thr-236 by PRKDC in response to DNA damage promotes translocation to the nucleus and recruitment to DNA double-strand breaks (DSBs). As to expression, expressed in red blood cells; underexpressed in red blood cells (cytoplasm) of patients with hereditary non-spherocytic hemolytic anemia of unknown etiology.

The protein resides in the mitochondrion. The protein localises to the cytoplasm. It localises to the cytosol. It is found in the nucleus. Its subcellular location is the chromosome. The enzyme catalyses (S)-malate = fumarate + H2O. It participates in carbohydrate metabolism; tricarboxylic acid cycle; (S)-malate from fumarate: step 1/1. Catalyzes the reversible stereospecific interconversion of fumarate to L-malate. Experiments in other species have demonstrated that specific isoforms of this protein act in defined pathways and favor one direction over the other. In terms of biological role, catalyzes the hydration of fumarate to L-malate in the tricarboxylic acid (TCA) cycle to facilitate a transition step in the production of energy in the form of NADH. Its function is as follows. Catalyzes the dehydration of L-malate to fumarate. Fumarate metabolism in the cytosol plays a role during urea cycle and arginine metabolism; fumarate being a by-product of the urea cycle and amino-acid catabolism. Also plays a role in DNA repair by promoting non-homologous end-joining (NHEJ). In response to DNA damage and phosphorylation by PRKDC, translocates to the nucleus and accumulates at DNA double-strand breaks (DSBs): acts by catalyzing formation of fumarate, an inhibitor of KDM2B histone demethylase activity, resulting in enhanced dimethylation of histone H3 'Lys-36' (H3K36me2). The sequence is that of Fumarate hydratase, mitochondrial from Homo sapiens (Human).